A 549-amino-acid polypeptide reads, in one-letter code: SET and MYND domain-containing protein DDB_G0277331 (549 aa).

Residues K27–S283 form the SET domain. 8 residues coordinate Zn(2+): C71, C74, C90, C93, C99, C103, H111, and C115. An MYND-type zinc finger spans residues C71–C115. A coiled-coil region spans residues N340 to S401.

Belongs to the class V-like SAM-binding methyltransferase superfamily.

In terms of biological role, probable methyltransferase. This chain is SET and MYND domain-containing protein DDB_G0277331, found in Dictyostelium discoideum (Social amoeba).